Reading from the N-terminus, the 296-residue chain is Light-independent protochlorophyllide reductase iron-sulfur ATP-binding protein (296 aa).

ATP-binding positions include 39–44 (GIGKST) and lysine 68. Serine 43 contacts Mg(2+). Cysteine 124 and cysteine 158 together coordinate [4Fe-4S] cluster. 209 to 210 (NR) is a binding site for ATP.

Belongs to the NifH/BchL/ChlL family. In terms of assembly, homodimer. Protochlorophyllide reductase is composed of three subunits; ChlL, ChlN and ChlB. [4Fe-4S] cluster is required as a cofactor.

It carries out the reaction chlorophyllide a + oxidized 2[4Fe-4S]-[ferredoxin] + 2 ADP + 2 phosphate = protochlorophyllide a + reduced 2[4Fe-4S]-[ferredoxin] + 2 ATP + 2 H2O. Its pathway is porphyrin-containing compound metabolism; chlorophyll biosynthesis (light-independent). Functionally, component of the dark-operative protochlorophyllide reductase (DPOR) that uses Mg-ATP and reduced ferredoxin to reduce ring D of protochlorophyllide (Pchlide) to form chlorophyllide a (Chlide). This reaction is light-independent. The L component serves as a unique electron donor to the NB-component of the complex, and binds Mg-ATP. The protein is Light-independent protochlorophyllide reductase iron-sulfur ATP-binding protein of Synechococcus sp. (strain CC9605).